The sequence spans 182 residues: Isopentenyl-diphosphate Delta-isomerase (182 aa).

Mn(2+) is bound by residues H25 and H32. The region spanning 30–164 is the Nudix hydrolase domain; sequence LLHLAFSSWL…PWAFSPWMVM (135 aa). C67 is an active-site residue. Residue H69 coordinates Mn(2+). E87 provides a ligand contact to Mg(2+). Residues E114 and E116 each coordinate Mn(2+). E116 is an active-site residue.

It belongs to the IPP isomerase type 1 family. Homodimer. The cofactor is Mg(2+). Mn(2+) is required as a cofactor.

It is found in the cytoplasm. The catalysed reaction is isopentenyl diphosphate = dimethylallyl diphosphate. Its pathway is isoprenoid biosynthesis; dimethylallyl diphosphate biosynthesis; dimethylallyl diphosphate from isopentenyl diphosphate: step 1/1. Catalyzes the 1,3-allylic rearrangement of the homoallylic substrate isopentenyl (IPP) to its highly electrophilic allylic isomer, dimethylallyl diphosphate (DMAPP). The sequence is that of Isopentenyl-diphosphate Delta-isomerase from Escherichia coli O45:K1 (strain S88 / ExPEC).